Here is a 130-residue protein sequence, read N- to C-terminus: Protein ApaG (130 aa).

An ApaG domain is found at arginine 3 to arginine 127.

The protein is Protein ApaG of Rhizobium meliloti (strain 1021) (Ensifer meliloti).